The sequence spans 680 residues: Leucine-rich repeat and calponin homology domain-containing protein 4 (680 aa).

The segment covering Met-1–Leu-22 has biased composition (low complexity). The tract at residues Met-1–Glu-35 is disordered. LRR repeat units follow at residues Ala-41–Ser-64, Leu-67–Leu-90, Ser-92–Leu-113, Thr-114–Leu-136, Leu-138–Leu-158, Gly-159–Leu-181, Arg-182–Leu-204, Leu-206–Leu-226, and Arg-227–Gly-250. Phosphoserine is present on residues Ser-279, Ser-281, Ser-304, Ser-307, Ser-309, and Ser-313. Residues Ser-329–Pro-528 are disordered. The span at Glu-330–Gly-345 shows a compositional bias: basic and acidic residues. Residues Ala-346–Asp-355 show a composition bias toward acidic residues. Basic and acidic residues-rich tracts occupy residues Ile-357 to Ala-371 and Asp-385 to Gln-418. The residue at position 432 (Ser-432) is a Phosphoserine. Low complexity-rich tracts occupy residues Ala-440–Thr-453 and Arg-510–Pro-528. Phosphoserine is present on residues Ser-511, Ser-513, Ser-517, Ser-521, and Ser-586. The 114-residue stretch at Phe-531–Gly-644 folds into the Calponin-homology (CH) domain. A helical membrane pass occupies residues Gly-655–Thr-675.

In terms of tissue distribution, widely expressed across tissues, with the most abundant expression in spleen, testes, thymus, intestine, and blood. Expressed in macrophages.

It localises to the cell membrane. Its function is as follows. Accessory protein that regulates signaling by multiple TLRs, acting as a broad-spanning regulator of the innate immune response. In macrophages, binds LPS and promotes proper docking of LPS in lipid raft membrane. May be required for lipid raft maintenance. The chain is Leucine-rich repeat and calponin homology domain-containing protein 4 (Lrch4) from Mus musculus (Mouse).